A 192-amino-acid polypeptide reads, in one-letter code: Xanthine phosphoribosyltransferase (192 aa).

Residues Leu20 and Asn27 each contribute to the xanthine site. 128–132 lines the 5-phospho-alpha-D-ribose 1-diphosphate pocket; that stretch reads ANGQA. Lys156 is a binding site for xanthine.

The protein belongs to the purine/pyrimidine phosphoribosyltransferase family. Xpt subfamily. In terms of assembly, homodimer.

Its subcellular location is the cytoplasm. The catalysed reaction is XMP + diphosphate = xanthine + 5-phospho-alpha-D-ribose 1-diphosphate. It participates in purine metabolism; XMP biosynthesis via salvage pathway; XMP from xanthine: step 1/1. Functionally, converts the preformed base xanthine, a product of nucleic acid breakdown, to xanthosine 5'-monophosphate (XMP), so it can be reused for RNA or DNA synthesis. This is Xanthine phosphoribosyltransferase from Listeria monocytogenes serotype 4b (strain CLIP80459).